The primary structure comprises 324 residues: PTS system glucose-specific EIICBA component (324 aa).

The region spanning 1–63 is the PTS EIIC type-1 domain; it reads HLLNVKIGMT…KWDLATPGRE (63 aa). A run of 2 helical transmembrane segments spans residues 5–25 and 28–48; these read VKIG…GVLP and TAWW…YFGF. The 82-residue stretch at 78-159 folds into the PTS EIIB type-1 domain; sequence GDLPYEVLAA…QDIMQGKAPA (82 aa). Cysteine 100 serves as the catalytic Phosphocysteine intermediate; for EIIB activity. Residues 156–177 are disordered; that stretch reads KAPARAEEKPKTAASEAAESET. Over residues 167–177 the composition is skewed to low complexity; the sequence is TAASEAAESET. One can recognise a PTS EIIA type-1 domain in the interval 194–298; sequence DQVFSQKMMG…SIVTPVIFTN (105 aa). The Tele-phosphohistidine intermediate; for EIIA activity role is filled by histidine 246.

The protein localises to the cell membrane. The catalysed reaction is N(pros)-phospho-L-histidyl-[protein] + D-glucose(out) = D-glucose 6-phosphate(in) + L-histidyl-[protein]. Functionally, the phosphoenolpyruvate-dependent sugar phosphotransferase system (sugar PTS), a major carbohydrate active transport system, catalyzes the phosphorylation of incoming sugar substrates concomitantly with their translocation across the cell membrane. This system is involved in glucose transport. The sequence is that of PTS system glucose-specific EIICBA component (ptsG) from Geobacillus stearothermophilus (Bacillus stearothermophilus).